The sequence spans 149 residues: Nucleoside diphosphate kinase (149 aa).

The ATP site is built by lysine 9, phenylalanine 57, arginine 85, threonine 91, arginine 102, and asparagine 112. The active-site Pros-phosphohistidine intermediate is histidine 115.

This sequence belongs to the NDK family. As to quaternary structure, homotetramer. It depends on Mg(2+) as a cofactor.

It localises to the cytoplasm. It catalyses the reaction a 2'-deoxyribonucleoside 5'-diphosphate + ATP = a 2'-deoxyribonucleoside 5'-triphosphate + ADP. The catalysed reaction is a ribonucleoside 5'-diphosphate + ATP = a ribonucleoside 5'-triphosphate + ADP. Its function is as follows. Major role in the synthesis of nucleoside triphosphates other than ATP. The ATP gamma phosphate is transferred to the NDP beta phosphate via a ping-pong mechanism, using a phosphorylated active-site intermediate. The polypeptide is Nucleoside diphosphate kinase (Staphylococcus aureus (strain Mu3 / ATCC 700698)).